The following is a 303-amino-acid chain: Flavin-dependent thymidylate synthase (303 aa).

Residues Gly41–Tyr258 enclose the ThyX domain. Residues Ser95, Arg118–Arg120, and Glu126 each bind FAD. Residues Gln115–Arg118, Glu126–Arg130, and Arg197 contribute to the dUMP site. The ThyX motif motif lies at Arg118–Ser128. Residues Asp213–His215 and His219 contribute to the FAD site. Position 224 (Arg224) interacts with dUMP. The active-site Involved in ionization of N3 of dUMP, leading to its activation is Arg224.

The protein belongs to the thymidylate synthase ThyX family. Homotetramer. It depends on FAD as a cofactor.

It carries out the reaction dUMP + (6R)-5,10-methylene-5,6,7,8-tetrahydrofolate + NADPH + H(+) = dTMP + (6S)-5,6,7,8-tetrahydrofolate + NADP(+). It participates in pyrimidine metabolism; dTTP biosynthesis. Catalyzes the reductive methylation of 2'-deoxyuridine-5'-monophosphate (dUMP) to 2'-deoxythymidine-5'-monophosphate (dTMP) while utilizing 5,10-methylenetetrahydrofolate (mTHF) as the methyl donor, and NADPH and FADH(2) as the reductant. In Dictyostelium discoideum (Social amoeba), this protein is Flavin-dependent thymidylate synthase (thyA).